Here is a 481-residue protein sequence, read N- to C-terminus: Ribulose bisphosphate carboxylase large chain (481 aa).

A propeptide spanning residues 1-2 (MS) is cleaved from the precursor. Residue Pro3 is modified to N-acetylproline. N6,N6,N6-trimethyllysine is present on Lys14. Substrate contacts are provided by Asn123 and Thr173. The Proton acceptor role is filled by Lys175. Lys177 serves as a coordination point for substrate. Lys201, Asp203, and Glu204 together coordinate Mg(2+). Lys201 carries the N6-carboxylysine modification. His294 functions as the Proton acceptor in the catalytic mechanism. Substrate contacts are provided by Arg295, His327, and Ser379.

Belongs to the RuBisCO large chain family. Type I subfamily. As to quaternary structure, heterohexadecamer of 8 large chains and 8 small chains; disulfide-linked. The disulfide link is formed within the large subunit homodimers. Mg(2+) is required as a cofactor. Post-translationally, the disulfide bond which can form in the large chain dimeric partners within the hexadecamer appears to be associated with oxidative stress and protein turnover.

The protein localises to the plastid. The protein resides in the chloroplast. It catalyses the reaction 2 (2R)-3-phosphoglycerate + 2 H(+) = D-ribulose 1,5-bisphosphate + CO2 + H2O. It carries out the reaction D-ribulose 1,5-bisphosphate + O2 = 2-phosphoglycolate + (2R)-3-phosphoglycerate + 2 H(+). Its function is as follows. RuBisCO catalyzes two reactions: the carboxylation of D-ribulose 1,5-bisphosphate, the primary event in carbon dioxide fixation, as well as the oxidative fragmentation of the pentose substrate in the photorespiration process. Both reactions occur simultaneously and in competition at the same active site. This is Ribulose bisphosphate carboxylase large chain from Coffea arabica (Arabian coffee).